Consider the following 280-residue polypeptide: Ribosomal RNA small subunit methyltransferase A (280 aa).

Asparagine 28, leucine 30, glycine 55, glutamate 77, aspartate 103, and asparagine 122 together coordinate S-adenosyl-L-methionine.

It belongs to the class I-like SAM-binding methyltransferase superfamily. rRNA adenine N(6)-methyltransferase family. RsmA subfamily.

It localises to the cytoplasm. It carries out the reaction adenosine(1518)/adenosine(1519) in 16S rRNA + 4 S-adenosyl-L-methionine = N(6)-dimethyladenosine(1518)/N(6)-dimethyladenosine(1519) in 16S rRNA + 4 S-adenosyl-L-homocysteine + 4 H(+). Functionally, specifically dimethylates two adjacent adenosines (A1518 and A1519) in the loop of a conserved hairpin near the 3'-end of 16S rRNA in the 30S particle. May play a critical role in biogenesis of 30S subunits. In Dinoroseobacter shibae (strain DSM 16493 / NCIMB 14021 / DFL 12), this protein is Ribosomal RNA small subunit methyltransferase A.